A 131-amino-acid chain; its full sequence is Small ribosomal subunit protein uS11 (131 aa).

Belongs to the universal ribosomal protein uS11 family. Part of the 30S ribosomal subunit. Interacts with proteins S7 and S18. Binds to IF-3.

In terms of biological role, located on the platform of the 30S subunit, it bridges several disparate RNA helices of the 16S rRNA. Forms part of the Shine-Dalgarno cleft in the 70S ribosome. This is Small ribosomal subunit protein uS11 from Halorhodospira halophila (strain DSM 244 / SL1) (Ectothiorhodospira halophila (strain DSM 244 / SL1)).